The chain runs to 133 residues: Putative esterase STK_17900 (133 aa).

Belongs to the thioesterase PaaI family.

This Sulfurisphaera tokodaii (strain DSM 16993 / JCM 10545 / NBRC 100140 / 7) (Sulfolobus tokodaii) protein is Putative esterase STK_17900.